The primary structure comprises 453 residues: Transcription factor radR (453 aa).

Positions 1–30 (MPNNLQHQEGSYSLRSSNDVSPADDWTQTN) are enriched in polar residues. The tract at residues 1 to 45 (MPNNLQHQEGSYSLRSSNDVSPADDWTQTNDPKEKKRIQNRVAQR) is disordered. The 33-residue stretch at 30 to 62 (NDPKEKKRIQNRVAQRTYRNRIRARLEELENKI) folds into the bZIP domain. A basic motif region spans residues 33–50 (KEKKRIQNRVAQRTYRNR). A leucine-zipper region spans residues 51 to 58 (IRARLEEL). Residues 160–184 (APRAAQARSIAPTSTGMHQISPSYG) are disordered. Residues 170–181 (APTSTGMHQISP) show a composition bias toward polar residues.

The protein belongs to the bZIP family.

The protein resides in the nucleus. Functionally, transcription factor that positively regulates the expression of the gene clusters that mediate the biosynthesis of pestheic acid, a diphenyl ether which is a biosynthetic precursor of the unique chloropupukeananes. The chain is Transcription factor radR from Floropilus chiversii (Chaetomium chiversii).